Here is a 469-residue protein sequence, read N- to C-terminus: MNPNQKIITIGSVSLTIATICFLMQIAILVTTVTLHFKQYECDYPANNQAMPCEPIIIERNITEIVYLTNTTIEKEVCPKLVEYRNWSKPQCKITGFAPFSKDNSIRLSAGGDIWVTREPYVSCDPGKCYQFALGQGTTLDNKHSNDTIHDRTPHRTLLMNELGVPFHLGTRQVCIAWSSSSCHDGKAWLHVCVTGYDKNATASFIYDGRLVDSIGSWSQNILRTQESECVCINGTCTVVMTDGSASGRADTKILFIEEGKIVHTSPLSGSAQHVEECSCYPRYPGVRCICRDNWKGSNRPVVDINVKDYSINSSYVCSGLVGDTPRNNDRSSSSYCQNPNNEKGTHGVKGWAFDDGNDVWMGRTISEDSRSGYETFKVIGGWSTPNSKLQINRQVIVDSDNRSGYSGIFSVEGKSCINRCFYVELIRGREQETRVWWTSNSIVVFCGTSGTYGTGSWPDGADINIMPI.

Over 1–9 (MNPNQKIIT) the chain is Intravirion. A helical membrane pass occupies residues 10 to 30 (IGSVSLTIATICFLMQIAILV). Positions 11–33 (GSVSLTIATICFLMQIAILVTTV) are involved in apical transport and lipid raft association. The Virion surface portion of the chain corresponds to 31 to 469 (TTVTLHFKQY…DGADINIMPI (439 aa)). Positions 36 to 88 (HFKQYECDYPANNQAMPCEPIIIERNITEIVYLTNTTIEKEVCPKLVEYRNWS) are hypervariable stalk region. N-linked (GlcNAc...) asparagine; by host glycosylation is found at asparagine 61, asparagine 70, and asparagine 86. The interval 91 to 469 (QCKITGFAPF…DGADINIMPI (379 aa)) is head of neuraminidase. Intrachain disulfides connect cysteine 92-cysteine 417, cysteine 124-cysteine 129, cysteine 183-cysteine 230, cysteine 232-cysteine 237, cysteine 278-cysteine 291, cysteine 280-cysteine 289, cysteine 318-cysteine 337, and cysteine 421-cysteine 447. Residue arginine 118 participates in substrate binding. A glycan (N-linked (GlcNAc...) asparagine; by host) is linked at asparagine 146. Aspartate 151 (proton donor/acceptor) is an active-site residue. Arginine 152 contributes to the substrate binding site. Asparagine 200 and asparagine 234 each carry an N-linked (GlcNAc...) asparagine; by host glycan. 276–277 (EE) provides a ligand contact to substrate. Arginine 292 is a substrate binding site. The Ca(2+) site is built by aspartate 293 and glycine 297. Asparagine 313 carries N-linked (GlcNAc...) asparagine; by host glycosylation. Position 324 (aspartate 324) interacts with Ca(2+). Arginine 371 contributes to the substrate binding site. N-linked (GlcNAc...) asparagine; by host glycosylation is present at asparagine 402. Tyrosine 406 serves as the catalytic Nucleophile.

Belongs to the glycosyl hydrolase 34 family. In terms of assembly, homotetramer. Ca(2+) serves as cofactor. Post-translationally, N-glycosylated.

It localises to the virion membrane. The protein resides in the host apical cell membrane. It catalyses the reaction Hydrolysis of alpha-(2-&gt;3)-, alpha-(2-&gt;6)-, alpha-(2-&gt;8)- glycosidic linkages of terminal sialic acid residues in oligosaccharides, glycoproteins, glycolipids, colominic acid and synthetic substrates.. Inhibited by the neuraminidase inhibitors zanamivir (Relenza) and oseltamivir (Tamiflu). These drugs interfere with the release of progeny virus from infected cells and are effective against all influenza strains. Resistance to neuraminidase inhibitors is quite rare. Functionally, catalyzes the removal of terminal sialic acid residues from viral and cellular glycoconjugates. Cleaves off the terminal sialic acids on the glycosylated HA during virus budding to facilitate virus release. Additionally helps virus spread through the circulation by further removing sialic acids from the cell surface. These cleavages prevent self-aggregation and ensure the efficient spread of the progeny virus from cell to cell. Otherwise, infection would be limited to one round of replication. Described as a receptor-destroying enzyme because it cleaves a terminal sialic acid from the cellular receptors. May facilitate viral invasion of the upper airways by cleaving the sialic acid moieties on the mucin of the airway epithelial cells. Likely to plays a role in the budding process through its association with lipid rafts during intracellular transport. May additionally display a raft-association independent effect on budding. Plays a role in the determination of host range restriction on replication and virulence. Sialidase activity in late endosome/lysosome traffic seems to enhance virus replication. The sequence is that of Neuraminidase from Aves (whales).